The following is a 187-amino-acid chain: Ribose 1,5-bisphosphate phosphokinase PhnN (187 aa).

10–17 (GPSGSGKD) is a binding site for ATP.

Belongs to the ribose 1,5-bisphosphokinase family.

It carries out the reaction alpha-D-ribose 1,5-bisphosphate + ATP = 5-phospho-alpha-D-ribose 1-diphosphate + ADP. The protein operates within metabolic intermediate biosynthesis; 5-phospho-alpha-D-ribose 1-diphosphate biosynthesis; 5-phospho-alpha-D-ribose 1-diphosphate from D-ribose 5-phosphate (route II): step 3/3. In terms of biological role, catalyzes the phosphorylation of ribose 1,5-bisphosphate to 5-phospho-D-ribosyl alpha-1-diphosphate (PRPP). The protein is Ribose 1,5-bisphosphate phosphokinase PhnN of Klebsiella pneumoniae subsp. pneumoniae (strain ATCC 700721 / MGH 78578).